A 279-amino-acid chain; its full sequence is Undecaprenyl-diphosphatase (279 aa).

Helical transmembrane passes span 45 to 65 (FVEM…IVIY), 85 to 105 (WQLW…ALPF), 113 to 133 (FNFM…FIWV), 188 to 208 (SVAA…YSGL), 226 to 246 (LILL…IRFL), and 255 to 275 (FTIF…YWLV).

It belongs to the UppP family.

It localises to the cell membrane. The enzyme catalyses di-trans,octa-cis-undecaprenyl diphosphate + H2O = di-trans,octa-cis-undecaprenyl phosphate + phosphate + H(+). Catalyzes the dephosphorylation of undecaprenyl diphosphate (UPP). Confers resistance to bacitracin. The polypeptide is Undecaprenyl-diphosphatase (Streptococcus agalactiae serotype Ia (strain ATCC 27591 / A909 / CDC SS700)).